A 607-amino-acid chain; its full sequence is Thymidine kinase (607 aa).

Disordered stretches follow at residues 1 to 160 (MAGF…ADST) and 180 to 215 (DDKSDCESEDESNFRRPSSHSALKQKNGGKGKPSGL). Residues 17–32 (KCQEDESPENERHENF) are compositionally biased toward basic and acidic residues. Composition is skewed to polar residues over residues 88–106 (AAVTSNTGNSPGSRHTSCP), 148–160 (RKTSCTEGGADST), and 194–203 (RRPSSHSALK). 291–298 (GAPGVGKT) contacts ATP. Glu-317 functions as the Proton acceptor in the catalytic mechanism. A substrate-binding site is contributed by Gln-355. Position 445 (Arg-445) interacts with ATP. Arg-451 is a binding site for substrate.

The protein belongs to the herpesviridae thymidine kinase family. As to quaternary structure, homodimer.

It localises to the virion tegument. The protein localises to the host nucleus. It carries out the reaction thymidine + ATP = dTMP + ADP + H(+). Catalyzes the transfer of the gamma-phospho group of ATP to thymidine to generate dTMP in the salvage pathway of pyrimidine synthesis. The dTMP serves as a substrate for DNA polymerase during viral DNA replication. Allows the virus to be reactivated and to grow in non-proliferative cells lacking a high concentration of phosphorylated nucleic acid precursors. This Epstein-Barr virus (strain AG876) (HHV-4) protein is Thymidine kinase.